The chain runs to 317 residues: tRNA pseudouridine synthase B (317 aa).

Catalysis depends on Asp-47, which acts as the Nucleophile.

It belongs to the pseudouridine synthase TruB family. Type 1 subfamily.

The catalysed reaction is uridine(55) in tRNA = pseudouridine(55) in tRNA. Functionally, responsible for synthesis of pseudouridine from uracil-55 in the psi GC loop of transfer RNAs. In Shewanella woodyi (strain ATCC 51908 / MS32), this protein is tRNA pseudouridine synthase B.